A 245-amino-acid polypeptide reads, in one-letter code: Biosynthetic peptidoglycan transglycosylase (245 aa).

A helical transmembrane segment spans residues 20–42; that stretch reads VYAGSVFAGAWLATQLFYLAQIA.

The protein belongs to the glycosyltransferase 51 family.

It is found in the cell inner membrane. It catalyses the reaction [GlcNAc-(1-&gt;4)-Mur2Ac(oyl-L-Ala-gamma-D-Glu-L-Lys-D-Ala-D-Ala)](n)-di-trans,octa-cis-undecaprenyl diphosphate + beta-D-GlcNAc-(1-&gt;4)-Mur2Ac(oyl-L-Ala-gamma-D-Glu-L-Lys-D-Ala-D-Ala)-di-trans,octa-cis-undecaprenyl diphosphate = [GlcNAc-(1-&gt;4)-Mur2Ac(oyl-L-Ala-gamma-D-Glu-L-Lys-D-Ala-D-Ala)](n+1)-di-trans,octa-cis-undecaprenyl diphosphate + di-trans,octa-cis-undecaprenyl diphosphate + H(+). It participates in cell wall biogenesis; peptidoglycan biosynthesis. Functionally, peptidoglycan polymerase that catalyzes glycan chain elongation from lipid-linked precursors. The sequence is that of Biosynthetic peptidoglycan transglycosylase from Burkholderia cenocepacia (strain HI2424).